We begin with the raw amino-acid sequence, 659 residues long: Threonine--tRNA ligase (659 aa).

Residues 1–61 (MIDLIFPDGS…TPDLLGGGNR (61 aa)) form the TGS domain. The tract at residues 249 to 541 (DHRKLGKTMD…LLENYAGHLP (293 aa)) is catalytic. Residues C341, H392, and H518 each coordinate Zn(2+). The tract at residues 637-659 (EEATPPDLARDRAVAAPAELAQA) is disordered.

It belongs to the class-II aminoacyl-tRNA synthetase family. As to quaternary structure, homodimer. Zn(2+) serves as cofactor.

Its subcellular location is the cytoplasm. It carries out the reaction tRNA(Thr) + L-threonine + ATP = L-threonyl-tRNA(Thr) + AMP + diphosphate + H(+). Catalyzes the attachment of threonine to tRNA(Thr) in a two-step reaction: L-threonine is first activated by ATP to form Thr-AMP and then transferred to the acceptor end of tRNA(Thr). Also edits incorrectly charged L-seryl-tRNA(Thr). The protein is Threonine--tRNA ligase of Caulobacter sp. (strain K31).